The chain runs to 229 residues: Ribose-5-phosphate isomerase A (229 aa).

Substrate is bound by residues threonine 28–threonine 31, aspartate 85–aspartate 88, and lysine 98–glycine 101. The Proton acceptor role is filled by glutamate 107. Lysine 125 is a binding site for substrate.

Belongs to the ribose 5-phosphate isomerase family. Homodimer.

The catalysed reaction is aldehydo-D-ribose 5-phosphate = D-ribulose 5-phosphate. Its pathway is carbohydrate degradation; pentose phosphate pathway; D-ribose 5-phosphate from D-ribulose 5-phosphate (non-oxidative stage): step 1/1. In terms of biological role, catalyzes the reversible conversion of ribose-5-phosphate to ribulose 5-phosphate. The sequence is that of Ribose-5-phosphate isomerase A from Pyrococcus abyssi (strain GE5 / Orsay).